The primary structure comprises 702 residues: Solute carrier organic anion transporter family member 1B3 (702 aa).

Topologically, residues 1-28 are cytoplasmic; it reads MDQHQHLNKTAESASSEKKKTRRCNGFK. The helical transmembrane segment at 29-48 threads the bilayer; it reads MFLAALSFSYIAKALGGIIM. At 49 to 67 the chain is on the extracellular side; it reads KISITQIERRFDISSSLAG. Residues 68–88 traverse the membrane as a helical segment; that stretch reads LIDGSFEIGNLLVIVFVSYFG. Topologically, residues 89–94 are cytoplasmic; the sequence is SKLHRP. A helical transmembrane segment spans residues 95–119; that stretch reads KLIGIGCLLMGTGSILTSLPHFFMG. Topologically, residues 120-168 are extracellular; that stretch reads YYRYSKETHINPSENSTSSLSTCLINQTLSFNGTSPEIVEKDCVKESGS. N-linked (GlcNAc...) asparagine glycosylation is found at Asn-134, Asn-145, and Asn-151. Residues 169-197 traverse the membrane as a helical segment; it reads HMWIYVFMGNMLRGIGETPIVPLGISYID. The Cytoplasmic segment spans residues 198-216; it reads DFAKEGHSSLYLGSLNAIG. Residues 217–237 traverse the membrane as a helical segment; the sequence is MIGPVIGFALGSLFAKMYVDI. Residues 238-255 are Extracellular-facing; that stretch reads GYVDLSTIRITPKDSRWV. The helical transmembrane segment at 256 to 280 threads the bilayer; that stretch reads GAWWLGFLVSGLFSIISSIPFFFLP. Topologically, residues 281–331 are cytoplasmic; sequence KNPNKPQKERKISLSLHVLKTNDDRNQTANLTNQGKNVTKNVTGFFQSLKS. Phosphoserine is present on residues Ser-293 and Ser-295. Residues 332-353 form a helical membrane-spanning segment; that stretch reads ILTNPLYVIFLLLTLLQVSSFI. Residues 354 to 373 are Extracellular-facing; sequence GSFTYVFKYMEQQYGQSASH. The helical transmembrane segment at 374-397 threads the bilayer; sequence ANFLLGIITIPTVATGMFLGGFII. The Cytoplasmic portion of the chain corresponds to 398–401; the sequence is KKFK. A helical transmembrane segment spans residues 402–425; that stretch reads LSLVGIAKFSFLTSMISFLFQLLY. Topologically, residues 426–537 are extracellular; that stretch reads FPLICESKSV…NTCTRKFFIY (112 aa). Asn-445 carries an N-linked (GlcNAc...) asparagine glycan. The Kazal-like domain maps to 453–508; it reads DVPLSYCNSECNCDESQWEPVCGNNGITYLSPCLAGCKSSSGIKKHTVFYNCSCVE. Intrachain disulfides connect Cys-459/Cys-489, Cys-465/Cys-485, and Cys-474/Cys-506. N-linked (GlcNAc...) asparagine glycosylation is found at Asn-503 and Asn-516. Residues 538 to 560 form a helical membrane-spanning segment; the sequence is VAIQVINSLFSATGGTTFILLTV. Residues 561 to 569 lie on the Cytoplasmic side of the membrane; that stretch reads KIVQPELKA. A helical membrane pass occupies residues 570-595; that stretch reads LAMGFQSMVIRTLGGILAPIYFGALI. Residues 596–629 are Extracellular-facing; it reads DKTCMKWSTNSCGAQGACRIYNSVFFGRVYLGLS. The chain crosses the membrane as a helical span at residues 630–647; that stretch reads IALRFPALVLYIVFIFAM. Topologically, residues 648 to 695 are cytoplasmic; sequence KKKFQGKDTKASDNERKVMDEANLEFLNNGEHFVPSAGTDSKTCNLDM. Position 683 is a phosphoserine (Ser-683).

Belongs to the organo anion transporter (TC 2.A.60) family. N-glycosylated. In terms of tissue distribution, highly expressed in liver, in particular at the basolateral membrane of hepatocytes near the central vein. Expressed in the placenta. In testis, primarily localized to the basal membrane of Sertoli cells and weakly expressed in Leydig cells and within the tubules.

The protein resides in the basolateral cell membrane. Its subcellular location is the basal cell membrane. It carries out the reaction estrone 3-sulfate(out) + hydrogencarbonate(in) = estrone 3-sulfate(in) + hydrogencarbonate(out). The catalysed reaction is 17beta-estradiol 17-O-(beta-D-glucuronate)(out) = 17beta-estradiol 17-O-(beta-D-glucuronate)(in). The enzyme catalyses taurocholate(out) = taurocholate(in). It catalyses the reaction estrone 3-sulfate(out) = estrone 3-sulfate(in). It carries out the reaction dehydroepiandrosterone 3-sulfate(out) = dehydroepiandrosterone 3-sulfate(in). The catalysed reaction is leukotriene C4(out) = leukotriene C4(in). The enzyme catalyses L-thyroxine(out) = L-thyroxine(in). It catalyses the reaction prostaglandin E2(out) = prostaglandin E2(in). It carries out the reaction (4E,15E)-bilirubin IXalpha C8-beta-D-glucuronoside(out) = (4E,15E)-bilirubin IXalpha C8-beta-D-glucuronoside(in). The catalysed reaction is bilirubin IXalpha bis-beta-D-glucuronoside(out) = bilirubin IXalpha bis-beta-D-glucuronoside(in). Functionally, mediates the Na(+)-independent uptake of organic anions. Shows broad substrate specificity, can transport both organic anions such as bile acid taurocholate (cholyltaurine) and conjugated steroids (17-beta-glucuronosyl estradiol, dehydroepiandrosterone sulfate (DHEAS), and estrone 3-sulfate), as well as eicosanoid leukotriene C4, prostaglandin E2 and L-thyroxine (T4). Hydrogencarbonate/HCO3(-) acts as the probable counteranion that exchanges for organic anions. Shows a pH-sensitive substrate specificity towards sulfated steroids, taurocholate and T4 which may be ascribed to the protonation state of the binding site and leads to a stimulation of substrate transport in an acidic microenvironment. Involved in the clearance of bile acids and organic anions from the liver. Can take up bilirubin glucuronides from plasma into the liver, contributing to the detoxification-enhancing liver-blood shuttling loop. Transports coproporphyrin I and III, by-products of heme synthesis, and may be involved in their hepatic disposition. May contribute to regulate the transport of organic compounds in testes across the blood-testis-barrier. Can transport HMG-CoA reductase inhibitors (also known as statins) such as pitavastatin, a clinically important class of hypolipidemic drugs. May play an important role in plasma and tissue distribution of the structurally diverse chemotherapeutic drugs methotrexate and paclitaxel. May also transport antihypertension agents, such as the angiotensin-converting enzyme (ACE) inhibitor prodrug enalapril, and the highly selective angiotensin II AT1-receptor antagonist valsartan, in the liver. In Homo sapiens (Human), this protein is Solute carrier organic anion transporter family member 1B3 (SLCO1B3).